Here is a 400-residue protein sequence, read N- to C-terminus: Sensory histidine kinase/phosphatase NtrB (400 aa).

Low complexity-rich tracts occupy residues 1-10 (MARASAAAPL) and 18-27 (RAPSSSYRPV). The interval 1–27 (MARASAAAPLPRRPARPRAPSSSYRPV) is disordered. The PAS domain occupies 29–99 (PCIDPSVMLN…IEQVQQGRHR (71 aa)). Positions 163–381 (MLGHEVKNPL…VFKVSLPMFD (219 aa)) constitute a Histidine kinase domain. Histidine 166 is modified (phosphohistidine; by autocatalysis).

Autophosphorylated.

It is found in the cytoplasm. It catalyses the reaction ATP + protein L-histidine = ADP + protein N-phospho-L-histidine.. In terms of biological role, member of the two-component regulatory system NtrB/NtrC, which controls expression of the nitrogen-regulated (ntr) genes in response to nitrogen limitation. Under conditions of nitrogen limitation, NtrB autophosphorylates and transfers the phosphoryl group to NtrC. In the presence of nitrogen, acts as a phosphatase that dephosphorylates and inactivates NtrC. The chain is Sensory histidine kinase/phosphatase NtrB from Azospirillum brasilense.